We begin with the raw amino-acid sequence, 90 residues long: Large ribosomal subunit protein bL27 (90 aa).

The interval Met-1–Gly-22 is disordered.

Belongs to the bacterial ribosomal protein bL27 family.

The polypeptide is Large ribosomal subunit protein bL27 (Caulobacter sp. (strain K31)).